The chain runs to 1533 residues: Maternal protein pumilio (1533 aa).

Disordered stretches follow at residues 102-149 (ACGD…TIGM), 207-276 (AAAV…QQHP), 304-331 (YDHH…PGAG), and 382-452 (WEKS…AGIL). The span at 103-117 (CGDDGHGIDNPDKWK) shows a compositional bias: basic and acidic residues. The segment covering 133–149 (PGNGSNGGPGAIGTIGM) has biased composition (gly residues). Positions 207 to 237 (AAAVAAQQQHQHPHQQHPQQQQQQQQAQNQG) are enriched in low complexity. The segment covering 243–255 (MGGGNGLGNGNGL) has biased composition (gly residues). Residues 256-276 (GIQHPGQQQQQQQQQQQQQHP) show a composition bias toward low complexity. A phosphoserine mark is found at Ser453, Ser468, Ser470, and Ser477. Residues 470–479 (SPTNKDSSLS) show a composition bias toward polar residues. Disordered regions lie at residues 470–558 (SPTN…NLLF), 697–725 (VGAP…QQQQ), 846–912 (VLVP…AFSP), and 975–1008 (LGAP…QQQQ). Basic and acidic residues predominate over residues 483-503 (PHLRNLKFDDNDKSRDDKEKA). Phosphoserine is present on Ser505. The span at 863–875 (PQLYQPQPQTAQQ) shows a compositional bias: low complexity. The region spanning 1091 to 1428 (GRSRLLEDFR…HINAKLEKYY (338 aa)) is the PUM-HD domain. Pumilio repeat units lie at residues 1111–1146 (DLAN…MVFS), 1147–1182 (EILA…TLGM), 1183–1218 (QVKG…EIVH), 1219–1254 (ELDG…FIIN), 1255–1290 (AFKG…PILD), 1291–1326 (ELHE…ILIN), 1327–1362 (SVRG…GLID), and 1366–1402 (TFND…KLMT). The tract at residues 1126-1130 (SRFIQ) is adenine-nucleotide binding in RNA target. The interval 1162 to 1166 (NYVIQ) is uracil-nucleotide binding in RNA target. Positions 1198-1202 (CRVIQ) are adenine-nucleotide binding in RNA target. The tract at residues 1234–1238 (NHVVQ) is non-specific-nucleotide binding in RNA target. Residues 1270–1274 (CRVIQ) are adenine-nucleotide binding in RNA target. The segment at 1306–1310 (NYVIQ) is uracil-nucleotide binding in RNA target. The tract at residues 1342–1346 (SNVVE) is guanine-nucleotide binding in RNA target. The uracil-nucleotide binding in RNA target stretch occupies residues 1382-1386 (NYVVQ). A disordered region spans residues 1494-1533 (AMVVEPSSPDASESSSSVVSGAVNSSLGPIGPPTNGNVVL). Low complexity predominate over residues 1496–1519 (VVEPSSPDASESSSSVVSGAVNSS).

In terms of assembly, interacts with nanos (nos) and brat. Acts via the formation of a quaternary complex composed of pum, nanos, brat and the 3'-UTR mRNA of hb.

The protein localises to the cytoplasm. The protein resides in the cytoplasmic ribonucleoprotein granule. In terms of biological role, sequence-specific RNA-binding protein that acts as a post-transcriptional repressor by binding the 3'-UTR of mRNA targets. Binds to an RNA consensus sequence, the Pumilio Response Element (PRE), 5'-UGUANAUA-3', that is related to the Nanos Response Element (NRE). Mediates post-transcriptional repression of transcripts via different mechanisms: acts via direct recruitment of deadenylase complexes leading to translational inhibition and mRNA degradation. Also mediates deadenylation-independent repression by promoting accessibility of miRNAs. Mediates post-transcriptional silencing of E2f mRNA by binding to its 3'-UTR and promoting miRNA regulation. Required for abdominal development and to support proliferation and self-renewal of germ cells. Pum is the only gene required for nanos (nos) activity that is not also required for posterior localization of germline determinants. Pum is required during embryogenesis when nanos activity apparently moves anteriorly from the posterior pole. The protein is Maternal protein pumilio (pum) of Drosophila melanogaster (Fruit fly).